Consider the following 116-residue polypeptide: U11-theraphotoxin-Hhn1c (116 aa).

An N-terminal signal peptide occupies residues 1 to 21 (MNTVRVTFLLVFVLAVSLGQA). The propeptide occupies 22 to 74 (DKDENRMEMQEKTEQGKSYLDFAENLLLQKLEELEAKLLEEDSEESRNSRQKR). Residues 61–83 (EEDSEESRNSRQKRCIGEGVPCD) form a disordered region. 3 cysteine pairs are disulfide-bonded: cysteine 75–cysteine 90, cysteine 82–cysteine 95, and cysteine 89–cysteine 110.

It belongs to the neurotoxin 14 (magi-1) family. 01 (HNTX-16) subfamily. Expressed by the venom gland.

The protein localises to the secreted. Functionally, probable ion channel inhibitor. This chain is U11-theraphotoxin-Hhn1c, found in Cyriopagopus hainanus (Chinese bird spider).